The primary structure comprises 245 residues: MQTPSVFMRKTAKYQIRETIITVIADEPYHPVCLDTIYRVRGELEAFIARDPYFQSTLEPYECPADAPDVVRRMCAATAKAGVGPMAAVAGTIGCMAVEAMAAAGAKYALVDNGGDIALVNDEPVVVGIYAGESPIKGLGLEIPPRDTILGVCTSSATVGPSISFGNSDAALVISDDVSLADAAATALGNRIVDVASLATAFDFLKEIPEVTGAVGIIGDKMATYGRLPKIVRAHVDYEKITKGD.

This sequence belongs to the UPF0280 family.

The sequence is that of UPF0280 protein UNCMA_16740 from Methanocella arvoryzae (strain DSM 22066 / NBRC 105507 / MRE50).